The primary structure comprises 138 residues: SHSKHHATYVKGANDAVAKLEEARAQEDFSSILLSEKNLAFNLAGHVNHTIWWKNLSPNGGDKPTGELAAAIDDAFGSFDTFSAQFHAASTTVQGSGWAALGWDTLGNKLLIFQVYDHQTNFPLGIVPLLLLDMWEHA.

Residues histidine 2, histidine 49, aspartate 133, and histidine 137 each coordinate Mn(2+).

It belongs to the iron/manganese superoxide dismutase family. It depends on Mn(2+) as a cofactor.

The catalysed reaction is 2 superoxide + 2 H(+) = H2O2 + O2. Its function is as follows. Destroys superoxide anion radicals which are normally produced within the cells and which are toxic to biological systems. The protein is Superoxide dismutase [Mn] (sodA) of Mycobacterium szulgai.